The primary structure comprises 131 residues: Probable lactoylglutathione lyase (131 aa).

The 125-residue stretch at 2-126 (FLLHTMIRVG…DGYKIELIQT (125 aa)) folds into the VOC domain. H5 serves as a coordination point for Ni(2+). R9 contributes to the substrate binding site. E56 lines the Ni(2+) pocket. Residues N60 and H74 each coordinate substrate. 2 residues coordinate Ni(2+): H74 and E122. E122 (proton donor/acceptor) is an active-site residue.

This sequence belongs to the glyoxalase I family. Ni(2+) is required as a cofactor.

It carries out the reaction (R)-S-lactoylglutathione = methylglyoxal + glutathione. It functions in the pathway secondary metabolite metabolism; methylglyoxal degradation; (R)-lactate from methylglyoxal: step 1/2. In terms of biological role, catalyzes the conversion of hemimercaptal, formed from methylglyoxal and glutathione, to S-lactoylglutathione. The protein is Probable lactoylglutathione lyase (gloA) of Synechocystis sp. (strain ATCC 27184 / PCC 6803 / Kazusa).